The following is a 374-amino-acid chain: 12-oxophytodienoate reductase 2 (374 aa).

Met-1 is modified (N-acetylmethionine). Residues 33 to 35, Ala-66, and Gln-108 contribute to the FMN site; that span reads PLT. His-185 contacts substrate. Residue Tyr-190 is the Proton donor of the active site. Arg-237 serves as a coordination point for FMN. Residue Arg-277 participates in substrate binding. FMN contacts are provided by residues 305-307 and 328-329; these read AGG and GR.

Belongs to the NADH:flavin oxidoreductase/NADH oxidase family. It depends on FMN as a cofactor. In terms of tissue distribution, expressed at highest levels in roots and cotyledons, and at lower levels in leaves, shoots and flowers (sepals, petals, maturing siliques and developing pollen).

It is found in the cytoplasm. The enzyme catalyses (1S,2S)-OPC-8 + NADP(+) = (9S,13S,15Z)-12-oxophyto-10,15-dienoate + NADPH + H(+). It carries out the reaction a 4,5-didehydrojasmonate + NADPH + H(+) = a jasmonate + NADP(+). The protein operates within lipid metabolism; oxylipin biosynthesis. In terms of biological role, specifically cleaves olefinic bonds in alpha,beta-unsaturated carbonyls and may be involved in detoxification or modification of these reactive compounds. May be involved in the biosynthesis or metabolism of oxylipin signaling molecules. In vitro, reduces 9R,13R-12-oxophytodienoic acid (9R,13R-OPDA) to 9R,13R-OPC-8:0, but only poorly 9S,13S-OPDA, the natural precursor of jasmonic acid (JA). Can detoxify the explosive 2,4,6-trinitrotoluene (TNT) in vitro and in vivo by catalyzing its nitroreduction to form hydroxylamino-dinitrotoluene (HADNT). Functions in an alternative and OPR3-independent pathway for JA biosynthesis. Catalyzes the NADPH-dependent reduction of 4,5-didehydrojasmonates to jasmonates. The sequence is that of 12-oxophytodienoate reductase 2 from Arabidopsis thaliana (Mouse-ear cress).